The chain runs to 285 residues: Probable endonuclease 4 (285 aa).

The Zn(2+) site is built by histidine 69, histidine 109, glutamate 145, aspartate 179, histidine 182, histidine 216, aspartate 229, histidine 231, and glutamate 261.

This sequence belongs to the AP endonuclease 2 family. It depends on Zn(2+) as a cofactor.

It catalyses the reaction Endonucleolytic cleavage to 5'-phosphooligonucleotide end-products.. Functionally, endonuclease IV plays a role in DNA repair. It cleaves phosphodiester bonds at apurinic or apyrimidinic (AP) sites, generating a 3'-hydroxyl group and a 5'-terminal sugar phosphate. The chain is Probable endonuclease 4 from Shigella dysenteriae serotype 1 (strain Sd197).